The chain runs to 119 residues: Protein TusC (119 aa).

The protein belongs to the DsrF/TusC family. As to quaternary structure, heterohexamer, formed by a dimer of trimers. The hexameric TusBCD complex contains 2 copies each of TusB, TusC and TusD. The TusBCD complex interacts with TusE.

It is found in the cytoplasm. Its function is as follows. Part of a sulfur-relay system required for 2-thiolation of 5-methylaminomethyl-2-thiouridine (mnm(5)s(2)U) at tRNA wobble positions. The sequence is that of Protein TusC from Buchnera aphidicola subsp. Acyrthosiphon pisum (strain 5A).